The sequence spans 334 residues: Ornithine carbamoyltransferase (334 aa).

Carbamoyl phosphate-binding positions include 57 to 60 (STRT), Gln-84, Arg-108, and 135 to 138 (HPTQ). L-ornithine is bound by residues Asn-168, Asp-232, and 236–237 (SM). Residues 274 to 275 (CL) and Arg-321 contribute to the carbamoyl phosphate site.

It belongs to the aspartate/ornithine carbamoyltransferase superfamily. OTCase family.

Its subcellular location is the cytoplasm. It carries out the reaction carbamoyl phosphate + L-ornithine = L-citrulline + phosphate + H(+). It functions in the pathway amino-acid biosynthesis; L-arginine biosynthesis; L-arginine from L-ornithine and carbamoyl phosphate: step 1/3. In terms of biological role, reversibly catalyzes the transfer of the carbamoyl group from carbamoyl phosphate (CP) to the N(epsilon) atom of ornithine (ORN) to produce L-citrulline. This is Ornithine carbamoyltransferase from Actinobacillus pleuropneumoniae serotype 5b (strain L20).